The primary structure comprises 441 residues: Dolichyl-diphosphooligosaccharide--protein glycosyltransferase 48 kDa subunit (441 aa).

The first 28 residues, 1 to 28 (MATALSGGFSKNALFILSAALMLQAVLG), serve as a signal peptide directing secretion. Over 29-410 (DGKTLVLLDN…TQYERFIPSA (382 aa)) the chain is Lumenal. The helical transmembrane segment at 411 to 431 (FPYYASAFSMMAGLFVFSVVF) threads the bilayer. Residues 432-441 (LHMREKEKSD) lie on the Cytoplasmic side of the membrane.

It belongs to the DDOST 48 kDa subunit family. In terms of assembly, component of the oligosaccharyltransferase (OST) complex.

It localises to the endoplasmic reticulum membrane. Its pathway is protein modification; protein glycosylation. Functionally, subunit of the oligosaccharyl transferase (OST) complex that catalyzes the initial transfer of a defined glycan (Glc(3)Man(9)GlcNAc(2) in eukaryotes) from the lipid carrier dolichol-pyrophosphate to an asparagine residue within an Asn-X-Ser/Thr consensus motif in nascent polypeptide chains, the first step in protein N-glycosylation. N-glycosylation occurs cotranslationally and the complex associates with the Sec61 complex at the channel-forming translocon complex that mediates protein translocation across the endoplasmic reticulum (ER). All subunits are required for a maximal enzyme activity. Required for the assembly of both SST3A- and SS3B-containing OST complexes. The sequence is that of Dolichyl-diphosphooligosaccharide--protein glycosyltransferase 48 kDa subunit from Danio rerio (Zebrafish).